The primary structure comprises 206 residues: Probable N-acetyltransferase 14 (206 aa).

The region spanning 6–206 (LSVREMREDE…TLVREFSKDL (201 aa)) is the N-acetyltransferase domain. Residues 57-77 (FVLASFALALLLPVFLAVAAV) form a helical membrane-spanning segment.

The protein belongs to the camello family. In terms of tissue distribution, expressed in K-562 and HeLa cell lines and in brain.

The protein resides in the membrane. Functionally, probable acetyltransferase. In terms of biological role, may act as a transcription factor that regulates the expression of coproporphyrinogen oxidase by binding to a promoter regulatory element. The protein is Probable N-acetyltransferase 14 (NAT14) of Homo sapiens (Human).